We begin with the raw amino-acid sequence, 253 residues long: Complement C1q subcomponent subunit B (253 aa).

A signal peptide spans 1 to 27 (MMMKIPWGSIPVLMLLLLLGLIDISQA). The residue at position 28 (glutamine 28) is a Pyrrolidone carboxylic acid. Proline 35, proline 38, proline 41, proline 53, and proline 56 each carry 4-hydroxyproline. Collagen-like domains lie at 37–86 (IPGI…PGNP) and 60–114 (GEKG…GESG). A disordered region spans residues 38–115 (PGIPGIPGTP…APGPKGESGD (78 aa)). A 5-hydroxylysine mark is found at lysine 59 and lysine 62. 4-hydroxyproline is present on proline 65. Basic and acidic residues predominate over residues 70–79 (DHGEFGEKGD). At lysine 77 the chain carries 5-hydroxylysine. A compositionally biased stretch (low complexity) spans 80–92 (PGIPGNPGKVGPK). A 4-hydroxyproline mark is found at proline 83 and proline 86. 5-hydroxylysine is present on residues lysine 92 and lysine 98. Over residues 96-105 (GPKGGPGAPG) the composition is skewed to gly residues. Residues proline 101, proline 104, and proline 107 each carry the 4-hydroxyproline modification. Lysine 110 is modified (5-hydroxylysine). The C1q domain maps to 117 to 253 (KATQKIAFSA…GFLLFPDMEA (137 aa)). A disulfide bridge connects residues cysteine 181 and cysteine 198. Aspartate 199, tyrosine 200, and glutamine 206 together coordinate Ca(2+).

Core component of the complement C1 complex, a calcium-dependent complex composed of 1 molecule of the C1Q subcomplex, 2 molecules of C1R and 2 molecules of C1S. The C1Q subcomplex is composed 18 subunits: 3 chains of C1QA, C1QB, and C1QC trimerize to form 6 collagen-like triple helices connected to six globular ligand-recognition modules (C1q domain). Post-translationally, hydroxylated on lysine and proline residues. Hydroxylated lysine residues can be glycosylated. Human C1Q contains up to 68.3 hydroxylysine-galactosylglucose residues and up to 2.5 hydroxylysine-galactose per molecule. Total percentage hydroxylysine residues glycosylated is 86.4%.

The protein resides in the secreted. It is found in the cell surface. With respect to regulation, the C1Q subcomplex is inhibited by sulfated molecules, such as triterpenoid sulfates, heparan sulfate, or chondroitin sulfates. In terms of biological role, core component of the complement C1 complex, a multiprotein complex that initiates the classical pathway of the complement system, a cascade of proteins that leads to phagocytosis and breakdown of pathogens and signaling that strengthens the adaptive immune system. The classical complement pathway is initiated by the C1Q subcomplex of the C1 complex, which specifically binds IgG or IgM immunoglobulins complexed with antigens, forming antigen-antibody complexes on the surface of pathogens: C1QA, together with C1QB and C1QC, specifically recognizes and binds the Fc regions of IgG or IgM via its C1q domain. Immunoglobulin-binding activates the proenzyme C1R, which cleaves C1S, initiating the proteolytic cascade of the complement system. The C1Q subcomplex is activated by a hexamer of IgG complexed with antigens, while it is activated by a pentameric IgM. The C1Q subcomplex also recognizes and binds phosphatidylserine exposed on the surface of cells undergoing programmed cell death, possibly promoting activation of the complement system. The protein is Complement C1q subcomponent subunit B of Homo sapiens (Human).